Consider the following 364-residue polypeptide: MSSAQRKDDHVRLATEQQRAHSGRNQFDDVSFVHHALAGIDRPDVRLATTFAGITWRLPLYINAMTGGSAKTGAINRDLAVAARETGAAIASGSMHAFFRDPSCADTFRVLRTENPDGFVMANVNATASVDNARRAVDLIEANALQIHLNTAQETPMPEGDRSFGSWPAQIAKITAAVDVPVIVKEVGNGLSRQTLLALPDLGVRVADVSGRGGTDFARIENSRRPLGDYAFLHGWGQSTPACLLDAQDVGFPLLASGGIRNPLDVARALALGAGAVGSSGVFLRTLIDGGVSALVAQISTWLDQLAALQTMLGARTPADLTRCDVLIHGPLRSFCTDRGIDIGRFARRSSSADIRSEMTGSTR.

The span at 1-13 shows a compositional bias: basic and acidic residues; sequence MSSAQRKDDHVRL. The disordered stretch occupies residues 1-24; the sequence is MSSAQRKDDHVRLATEQQRAHSGR. 6-7 is a substrate binding site; sequence RK. FMN-binding positions include 64 to 66, Ser94, and Asn123; that span reads AMT. 94–96 is a binding site for substrate; sequence SMH. Residue Gln153 participates in substrate binding. Glu154 is a binding site for Mg(2+). FMN-binding positions include Lys185, Ser210, Thr215, 259–261, and 280–281; these read GIR and SG.

This sequence belongs to the IPP isomerase type 2 family. As to quaternary structure, homooctamer. Dimer of tetramers. FMN serves as cofactor. It depends on NADPH as a cofactor. Mg(2+) is required as a cofactor.

The protein resides in the cytoplasm. The catalysed reaction is isopentenyl diphosphate = dimethylallyl diphosphate. Its function is as follows. Involved in the biosynthesis of isoprenoids. Catalyzes the 1,3-allylic rearrangement of the homoallylic substrate isopentenyl (IPP) to its allylic isomer, dimethylallyl diphosphate (DMAPP). The chain is Isopentenyl-diphosphate delta-isomerase from Kitasatospora griseola (Streptomyces griseolosporeus).